The chain runs to 665 residues: Protein kinase domain-containing protein ppk2 (665 aa).

Disordered regions lie at residues P42–F63, G82–S152, L187–N217, and A286–P343. Residues G82–W104 show a composition bias toward polar residues. Low complexity-rich tracts occupy residues S137–S152 and T206–N217. Over residues S294–V316 the composition is skewed to polar residues. S358 is modified (phosphoserine). The Protein kinase domain occupies Y388–L637. ATP is bound by residues I394–T402 and K417.

The protein localises to the cytoplasm. This is Protein kinase domain-containing protein ppk2 (ppk2) from Schizosaccharomyces pombe (strain 972 / ATCC 24843) (Fission yeast).